We begin with the raw amino-acid sequence, 143 residues long: Meiotically up-regulated gene 128 protein (143 aa).

Its function is as follows. Has a role in meiosis. This chain is Meiotically up-regulated gene 128 protein (mug128), found in Schizosaccharomyces pombe (strain 972 / ATCC 24843) (Fission yeast).